The following is a 406-amino-acid chain: Autotransporter heptosyltransferase TibC (406 aa).

Residues T107, L108, and G109 each contribute to the ADP-D-glycero-beta-D-manno-heptose site. D110 acts as the Proton acceptor in catalysis. Positions 224, 226, 230, 257, 281, 302, and 326 each coordinate ADP-D-glycero-beta-D-manno-heptose. Residues C339, C342, C358, and C370 each coordinate Fe(3+).

Belongs to the glycosyltransferase 9 family. As to quaternary structure, homododecamer composed of 6 homodimers forming a ring. Fe(3+) is required as a cofactor.

It catalyses the reaction ADP-D-glycero-beta-D-manno-heptose + L-seryl-[protein] = O-(D-glycero-alpha-D-manno-heptosyl)-L-seryl-[protein] + ADP + H(+). Its function is as follows. Glycosylates adhesin TibA. Specifically adds anomer D-glycero-beta-D-manno-heptose. Cannot use ADP-L-glycero-beta-D-manno-heptose as a sugar donor. The polypeptide is Autotransporter heptosyltransferase TibC (Escherichia coli O78:H11 (strain H10407 / ETEC)).